A 178-amino-acid chain; its full sequence is RNA-binding protein (178 aa).

The disordered stretch occupies residues 113 to 178 (PKIGSKNKKT…KGKGKRGGKR (66 aa)). The span at 168–178 (SKGKGKRGGKR) shows a compositional bias: basic residues.

Belongs to the phytoreovirus RNA-binding protein family.

The protein resides in the host cytoplasm. Constituent of viral factories. Binds to ssRNA and dsRNA. This chain is RNA-binding protein, found in Wound tumor virus (WTV).